The following is a 107-amino-acid chain: U1-lycotoxin-Ls1b (107 aa).

A signal peptide spans 1 to 20 (MMKVLVVVALLATLISYSSS). The propeptide occupies 21–41 (EGIDDLEADELLSLMANEQTR). 4 disulfides stabilise this stretch: Cys44–Cys59, Cys51–Cys68, Cys58–Cys86, and Cys70–Cys84.

Belongs to the neurotoxin 19 (CSTX) family. 04 (U1-Lctx) subfamily. Expressed by the venom gland.

It localises to the secreted. This chain is U1-lycotoxin-Ls1b, found in Lycosa singoriensis (Wolf spider).